A 326-amino-acid polypeptide reads, in one-letter code: Siroheme decarboxylase NirDL subunit (326 aa).

This sequence belongs to the Ahb/Nir family. Forms a complex composed of NirDL, NirG and NirH. All proteins are required for the total conversion of siroheme to didecarboxysiroheme.

It catalyses the reaction siroheme + 2 H(+) = 12,18-didecarboxysiroheme + 2 CO2. It functions in the pathway porphyrin-containing compound metabolism. Involved in heme d1 biosynthesis. Catalyzes the decarboxylation of siroheme into didecarboxysiroheme. Siroheme is probably decarboxylated to monodecarboxysiroheme, which is in turn decarboxylated to didecarboxysiroheme. This is Siroheme decarboxylase NirDL subunit from Paracoccus pantotrophus (Thiosphaera pantotropha).